A 119-amino-acid polypeptide reads, in one-letter code: Large ribosomal subunit protein uL18 (119 aa).

Belongs to the universal ribosomal protein uL18 family. Part of the 50S ribosomal subunit; part of the 5S rRNA/L5/L18/L25 subcomplex. Contacts the 5S and 23S rRNAs.

Its function is as follows. This is one of the proteins that bind and probably mediate the attachment of the 5S RNA into the large ribosomal subunit, where it forms part of the central protuberance. This chain is Large ribosomal subunit protein uL18, found in Cereibacter sphaeroides (strain ATCC 17025 / ATH 2.4.3) (Rhodobacter sphaeroides).